Consider the following 293-residue polypeptide: 33 kDa chaperonin (293 aa).

2 disulfide bridges follow: Cys-237–Cys-239 and Cys-271–Cys-274.

The protein belongs to the HSP33 family. Post-translationally, under oxidizing conditions two disulfide bonds are formed involving the reactive cysteines. Under reducing conditions zinc is bound to the reactive cysteines and the protein is inactive.

The protein resides in the cytoplasm. In terms of biological role, redox regulated molecular chaperone. Protects both thermally unfolding and oxidatively damaged proteins from irreversible aggregation. Plays an important role in the bacterial defense system toward oxidative stress. The protein is 33 kDa chaperonin of Haemophilus influenzae (strain PittEE).